The following is a 241-amino-acid chain: Ribonuclease PH (241 aa).

Phosphate contacts are provided by residues arginine 89 and 127 to 129; that span reads GTR.

Belongs to the RNase PH family. In terms of assembly, homohexameric ring arranged as a trimer of dimers.

The catalysed reaction is tRNA(n+1) + phosphate = tRNA(n) + a ribonucleoside 5'-diphosphate. Its function is as follows. Phosphorolytic 3'-5' exoribonuclease that plays an important role in tRNA 3'-end maturation. Removes nucleotide residues following the 3'-CCA terminus of tRNAs; can also add nucleotides to the ends of RNA molecules by using nucleoside diphosphates as substrates, but this may not be physiologically important. Probably plays a role in initiation of 16S rRNA degradation (leading to ribosome degradation) during starvation. In Xanthomonas euvesicatoria pv. vesicatoria (strain 85-10) (Xanthomonas campestris pv. vesicatoria), this protein is Ribonuclease PH.